A 93-amino-acid polypeptide reads, in one-letter code: Small ribosomal subunit protein uS19 (93 aa).

Belongs to the universal ribosomal protein uS19 family.

In terms of biological role, protein S19 forms a complex with S13 that binds strongly to the 16S ribosomal RNA. This Alkaliphilus metalliredigens (strain QYMF) protein is Small ribosomal subunit protein uS19.